The sequence spans 779 residues: Protein zer-1 homolog (779 aa).

An N-acetylalanine modification is found at Ala2. LRR repeat units follow at residues 226 to 245 (SLVLYNMDLSDDHIRVIVQL), 246 to 281 (HKLRSKILTCGPHLISSHLDISRDRLSSYYKFKLTR), and 291 to 315 (LGNLMSLDISGHMILENCSISKTDE). 5 ARM repeats span residues 440–480 (RSEQ…NFSI), 524–569 (DNDH…NITD), 571–613 (TPDN…NVAE), 615–656 (KELR…HIMF), and 727–769 (PDKY…HCSN).

Belongs to the zyg-11 family. In terms of assembly, interacts with the ELOC-ELOB/Elongin BC complex. Part of an E3 ubiquitin ligase complex including ZER1, CUL2 and Elongin BC.

Functionally, serves as substrate adapter subunit in the E3 ubiquitin ligase complex ZYG11B-CUL2-Elongin BC. Acts redudantly with ZYG11B to target substrates bearing N-terminal glycine degrons for proteasomal degradation. Involved in the clearance of proteolytic fragments generated by caspase cleavage during apoptosis since N-terminal glycine degrons are strongly enriched at caspase cleavage sites. Also important in the quality control of protein N-myristoylation in which N-terminal glycine degrons are conditionally exposed after a failure of N-myristoylation. The polypeptide is Protein zer-1 homolog (Mus musculus (Mouse)).